Consider the following 260-residue polypeptide: uncharacterized protein (260 aa).

The first 22 residues, 1–22 (MGYIKRIGLYISIFILIVMVAG), serve as a signal peptide directing secretion. Cysteine 23 carries the N-palmitoyl cysteine lipid modification. A lipid anchor (S-diacylglycerol cysteine) is attached at cysteine 23.

The protein belongs to the staphylococcal tandem lipoprotein family.

The protein localises to the cell membrane. This is an uncharacterized protein from Staphylococcus aureus (strain bovine RF122 / ET3-1).